The primary structure comprises 134 residues: Small ribosomal subunit protein uS8c (134 aa).

The protein belongs to the universal ribosomal protein uS8 family. Part of the 30S ribosomal subunit.

Its subcellular location is the plastid. The protein resides in the chloroplast. Functionally, one of the primary rRNA binding proteins, it binds directly to 16S rRNA central domain where it helps coordinate assembly of the platform of the 30S subunit. In Nicotiana tabacum (Common tobacco), this protein is Small ribosomal subunit protein uS8c (rps8).